Reading from the N-terminus, the 423-residue chain is Glucose-1-phosphate adenylyltransferase (423 aa).

Residues Tyr108, Gly173, 188-189 (EK), and Ser207 contribute to the alpha-D-glucose 1-phosphate site.

This sequence belongs to the bacterial/plant glucose-1-phosphate adenylyltransferase family. As to quaternary structure, homotetramer.

It carries out the reaction alpha-D-glucose 1-phosphate + ATP + H(+) = ADP-alpha-D-glucose + diphosphate. It participates in glycan biosynthesis; glycogen biosynthesis. Functionally, involved in the biosynthesis of ADP-glucose, a building block required for the elongation reactions to produce glycogen. Catalyzes the reaction between ATP and alpha-D-glucose 1-phosphate (G1P) to produce pyrophosphate and ADP-Glc. The polypeptide is Glucose-1-phosphate adenylyltransferase (Francisella tularensis subsp. holarctica (strain FTNF002-00 / FTA)).